The chain runs to 514 residues: Putative fucosyltransferase 10 (514 aa).

Residues Asn-185, Asn-210, Asn-355, Asn-377, and Asn-456 are each glycosylated (N-linked (GlcNAc...) asparagine).

This sequence belongs to the glycosyltransferase 37 family. In terms of tissue distribution, expressed in root, leaves, stems and seedlings.

It localises to the golgi apparatus. It functions in the pathway protein modification; protein glycosylation. In terms of biological role, may be involved in cell wall biosynthesis. May act as a fucosyltransferase. This Arabidopsis thaliana (Mouse-ear cress) protein is Putative fucosyltransferase 10 (FUT10).